Reading from the N-terminus, the 122-residue chain is Putative 2'-deoxynucleoside 5'-phosphate N-hydrolase 1 (122 aa).

Substrate-binding positions include 4 to 10, Tyr19, His37, Glu83, and 105 to 107; these read FLSGSIR and SAM.

The protein belongs to the 2'-deoxynucleoside 5'-phosphate N-hydrolase 1 family. Monomer and homodimer.

It catalyses the reaction a pyrimidine 2'-deoxyribonucleoside 5'-phosphate + H2O = a pyrimidine nucleobase + 2-deoxy-D-ribose 5-phosphate. The catalysed reaction is a purine 2'-deoxyribonucleoside 5'-phosphate + H2O = a purine nucleobase + 2-deoxy-D-ribose 5-phosphate. Catalyzes the cleavage of the N-glycosidic bond of deoxyribonucleoside 5'-monophosphates to yield deoxyribose 5-phosphate and a purine or pyrimidine base. In Methanococcoides burtonii (strain DSM 6242 / NBRC 107633 / OCM 468 / ACE-M), this protein is Putative 2'-deoxynucleoside 5'-phosphate N-hydrolase 1.